A 353-amino-acid chain; its full sequence is Anthranilate phosphoribosyltransferase (353 aa).

Residues glycine 86, 89–90, 96–99, 114–122, and serine 126 contribute to the 5-phospho-alpha-D-ribose 1-diphosphate site; these read GD, NVST, and KHGNRAVSG. Glycine 86 lines the anthranilate pocket. Serine 98 lines the Mg(2+) pocket. Asparagine 117 contacts anthranilate. Anthranilate is bound at residue arginine 172. The Mg(2+) site is built by aspartate 231 and glutamate 232.

The protein belongs to the anthranilate phosphoribosyltransferase family. In terms of assembly, homodimer. Mg(2+) is required as a cofactor.

The catalysed reaction is N-(5-phospho-beta-D-ribosyl)anthranilate + diphosphate = 5-phospho-alpha-D-ribose 1-diphosphate + anthranilate. The protein operates within amino-acid biosynthesis; L-tryptophan biosynthesis; L-tryptophan from chorismate: step 2/5. Catalyzes the transfer of the phosphoribosyl group of 5-phosphorylribose-1-pyrophosphate (PRPP) to anthranilate to yield N-(5'-phosphoribosyl)-anthranilate (PRA). The polypeptide is Anthranilate phosphoribosyltransferase (Pseudomonas syringae pv. syringae (strain B728a)).